The sequence spans 359 residues: Protein Wnt-5a (359 aa).

The first 20 residues, 1–20 (MATTHLTAALALLCALLQVD), serve as a signal peptide directing secretion. A disulfide bridge links Cys83 with Cys94. 2 N-linked (GlcNAc...) asparagine glycosylation sites follow: Asn93 and Asn99. 10 cysteine pairs are disulfide-bonded: Cys133/Cys141, Cys143/Cys161, Cys217/Cys231, Cys219/Cys226, Cys288/Cys319, Cys304/Cys314, Cys318/Cys358, Cys334/Cys349, Cys336/Cys346, and Cys341/Cys342. Ser223 carries O-palmitoleoyl serine; by PORCN lipidation. Residues Asn291 and Asn305 are each glycosylated (N-linked (GlcNAc...) asparagine).

The protein belongs to the Wnt family. Post-translationally, palmitoleoylation is required for efficient binding to frizzled receptors. Depalmitoleoylation leads to Wnt signaling pathway inhibition. As to expression, neuroectodermal and non-neuroectodermal tissues.

It localises to the secreted. It is found in the extracellular space. The protein localises to the extracellular matrix. Functionally, ligand for members of the frizzled family of seven transmembrane receptors. Can activate or inhibit canonical Wnt signaling, depending on receptor context. Required during embryogenesis for extension of the primary anterior-posterior axis. This Ambystoma mexicanum (Axolotl) protein is Protein Wnt-5a (WNT-5A).